Consider the following 431-residue polypeptide: Glutamate-1-semialdehyde 2,1-aminomutase (431 aa).

Residue Lys-265 is modified to N6-(pyridoxal phosphate)lysine.

The protein belongs to the class-III pyridoxal-phosphate-dependent aminotransferase family. HemL subfamily. Homodimer. It depends on pyridoxal 5'-phosphate as a cofactor.

The protein resides in the cytoplasm. It carries out the reaction (S)-4-amino-5-oxopentanoate = 5-aminolevulinate. It functions in the pathway porphyrin-containing compound metabolism; protoporphyrin-IX biosynthesis; 5-aminolevulinate from L-glutamyl-tRNA(Glu): step 2/2. This Vibrio vulnificus (strain CMCP6) protein is Glutamate-1-semialdehyde 2,1-aminomutase.